Here is a 25-residue protein sequence, read N- to C-terminus: XHPDLFXXRPDNTASPKFEDPRLNP.

The segment at 1 to 25 (XHPDLFXXRPDNTASPKFEDPRLNP) is disordered.

This sequence belongs to the ribosome-inactivating protein family.

It carries out the reaction Endohydrolysis of the N-glycosidic bond at one specific adenosine on the 28S rRNA.. Its function is as follows. Inhibits protein synthesis but does not possess ribonuclease activity. Also inhibits HIV-1 reverse transcriptase, beta-glucosidase and beta-glucuronidase. This Flammulina velutipes (Agaricus velutipes) protein is Ribosome-inactivating protein velutin.